The following is a 673-amino-acid chain: UvrABC system protein B (673 aa).

The Helicase ATP-binding domain occupies 26-183 (EGLEDGLAHQ…RRLAELQYTR (158 aa)). ATP is bound at residue 39-46 (GVTGSGKT). The short motif at 92 to 115 (YYDYYQPEAYVPSSDTFIEKDASV) is the Beta-hairpin element. In terms of domain architecture, Helicase C-terminal spans 431–597 (QVDDLLSEIR…GLNKKVVDIL (167 aa)). Positions 633–668 (QQKIHELEGQMMQHAQNLEFEEAAQIRDQLHQLREL) constitute a UVR domain.

The protein belongs to the UvrB family. As to quaternary structure, forms a heterotetramer with UvrA during the search for lesions. Interacts with UvrC in an incision complex.

It localises to the cytoplasm. Functionally, the UvrABC repair system catalyzes the recognition and processing of DNA lesions. A damage recognition complex composed of 2 UvrA and 2 UvrB subunits scans DNA for abnormalities. Upon binding of the UvrA(2)B(2) complex to a putative damaged site, the DNA wraps around one UvrB monomer. DNA wrap is dependent on ATP binding by UvrB and probably causes local melting of the DNA helix, facilitating insertion of UvrB beta-hairpin between the DNA strands. Then UvrB probes one DNA strand for the presence of a lesion. If a lesion is found the UvrA subunits dissociate and the UvrB-DNA preincision complex is formed. This complex is subsequently bound by UvrC and the second UvrB is released. If no lesion is found, the DNA wraps around the other UvrB subunit that will check the other stand for damage. The sequence is that of UvrABC system protein B from Klebsiella pneumoniae (strain 342).